A 471-amino-acid chain; its full sequence is Ribulose bisphosphate carboxylase large chain 2 (471 aa).

Residues Asn-116 and Thr-166 each contribute to the substrate site. Catalysis depends on Lys-168, which acts as the Proton acceptor. Residue Lys-170 coordinates substrate. Residues Lys-194, Asp-196, and Glu-197 each contribute to the Mg(2+) site. Lys-194 is subject to N6-carboxylysine. His-287 (proton acceptor) is an active-site residue. Arg-288, His-320, and Ser-372 together coordinate substrate.

The protein belongs to the RuBisCO large chain family. Type I subfamily. In terms of assembly, heterohexadecamer of 8 large chains and 8 small chains. Mg(2+) is required as a cofactor.

It localises to the carboxysome. It catalyses the reaction 2 (2R)-3-phosphoglycerate + 2 H(+) = D-ribulose 1,5-bisphosphate + CO2 + H2O. The catalysed reaction is D-ribulose 1,5-bisphosphate + O2 = 2-phosphoglycolate + (2R)-3-phosphoglycerate + 2 H(+). RuBisCO catalyzes two reactions: the carboxylation of D-ribulose 1,5-bisphosphate, the primary event in carbon dioxide fixation, as well as the oxidative fragmentation of the pentose substrate. Both reactions occur simultaneously and in competition at the same active site. This Hydrogenovibrio marinus protein is Ribulose bisphosphate carboxylase large chain 2.